Here is a 649-residue protein sequence, read N- to C-terminus: Replication factor C small subunit (649 aa).

55–385 (GPAGVGKCVT…GCIPTVMHNT (331 aa)) is a binding site for ATP.

It belongs to the activator 1 small subunits family. RfcS subfamily. In terms of assembly, heteromultimer composed of small subunits (RfcS) and large subunits (RfcL). This protein undergoes a protein self splicing that involves a post-translational excision of the intervening region (intein) followed by peptide ligation.

Functionally, part of the RFC clamp loader complex which loads the PCNA sliding clamp onto DNA. The protein is Replication factor C small subunit (rfcS) of Haloquadratum walsbyi (strain DSM 16790 / HBSQ001).